We begin with the raw amino-acid sequence, 114 residues long: Hydrogenase maturation factor HypA (114 aa).

A Ni(2+)-binding site is contributed by His-2. Cys-70, Cys-73, Cys-86, and Cys-89 together coordinate Zn(2+).

Belongs to the HypA/HybF family.

Involved in the maturation of [NiFe] hydrogenases. Required for nickel insertion into the metal center of the hydrogenase. The sequence is that of Hydrogenase maturation factor HypA from Trichodesmium erythraeum (strain IMS101).